The sequence spans 316 residues: Pantothenate kinase (316 aa).

Residue 95–102 (GSVAVGKS) coordinates ATP.

Belongs to the prokaryotic pantothenate kinase family.

The protein localises to the cytoplasm. It carries out the reaction (R)-pantothenate + ATP = (R)-4'-phosphopantothenate + ADP + H(+). It functions in the pathway cofactor biosynthesis; coenzyme A biosynthesis; CoA from (R)-pantothenate: step 1/5. The sequence is that of Pantothenate kinase from Klebsiella pneumoniae subsp. pneumoniae (strain ATCC 700721 / MGH 78578).